The primary structure comprises 586 residues: Arginine--tRNA ligase (586 aa).

The 'HIGH' region motif lies at 127–137 (PNVAKEMHVGH).

This sequence belongs to the class-I aminoacyl-tRNA synthetase family. As to quaternary structure, monomer.

The protein localises to the cytoplasm. The enzyme catalyses tRNA(Arg) + L-arginine + ATP = L-arginyl-tRNA(Arg) + AMP + diphosphate. The polypeptide is Arginine--tRNA ligase (argS) (Streptomyces coelicolor (strain ATCC BAA-471 / A3(2) / M145)).